The sequence spans 889 residues: DNA mismatch repair protein MutS (889 aa).

641–648 (GPNMAGKS) serves as a coordination point for ATP.

The protein belongs to the DNA mismatch repair MutS family.

Functionally, this protein is involved in the repair of mismatches in DNA. It is possible that it carries out the mismatch recognition step. This protein has a weak ATPase activity. The protein is DNA mismatch repair protein MutS of Orientia tsutsugamushi (strain Boryong) (Rickettsia tsutsugamushi).